Here is a 254-residue protein sequence, read N- to C-terminus: Protein orai-2 (254 aa).

4 helical membrane-spanning segments follow: residues 66-83, 94-114, 148-168, and 196-216; these read TSAL…EVQL, LIAF…ALLI, LAWG…VVLL, and AALV…VFTI.

Belongs to the Orai family. In terms of assembly, oligomerizes in homomeric and heteromeric ORAI complexes. Native CRAC channels most likely consist of hexameric ORAI heteromers, implying that diverse ORAI1, ORAI2 and ORAI3 subunit combinations with distinct biophysical properties can operate in a cell-type specific way. Interacts with STIM1; this regulates channel activity. Interacts with CRACR2A/EFCAB4B.

Its subcellular location is the cell membrane. The enzyme catalyses Ca(2+)(in) = Ca(2+)(out). Its activity is regulated as follows. CRAC channels are regulated by fast Ca(2+)-dependent inactivation (FCDI), a mechanism that limits Ca(2+) influx and cell toxicity. ORAI2 channels display prominent FCDI. Inhibited by lanthanides such as Gd(3+) ions. Functionally, pore-forming subunit of inward rectifying Ca(2+) release-activated Ca(2+) (CRAC) channels. Assembles with ORAI1 and ORAI3 to form hexameric CRAC channels that mediate Ca(2+) influx upon depletion of endoplasmic reticulum Ca(2+) store and channel activation by Ca(2+) sensor STIM1, a process known as store-operated Ca(2+) entry (SOCE). Various pore subunit combinations may account for distinct CRAC channel spatiotemporal and cell-type specific dynamics. ORAI1 mainly contributes to the generation of Ca(2+) plateaus involved in sustained Ca(2+) entry and is dispensable for cytosolic Ca(2+) oscillations, whereas ORAI2 and ORAI3 generate oscillatory patterns. CRAC channels assemble in Ca(2+) signaling microdomains where Ca(2+) influx is coupled to calmodulin and calcineurin signaling and activation of NFAT transcription factors recruited to ORAI1 via AKAP5. CRAC channels are the main pathway for Ca(2+) influx in T cells and promote the immune response to pathogens by activating NFAT-dependent cytokine and chemokine transcription. This is Protein orai-2 (ORAI2) from Homo sapiens (Human).